The sequence spans 198 residues: Recombination protein RecR (198 aa).

The segment at 57-72 adopts a C4-type zinc-finger fold; it reads CSVCGHITENDPCYIC. Residues 80-175 form the Toprim domain; that stretch reads SVICVVEDDK…KVTRLAQGLS (96 aa).

The protein belongs to the RecR family.

Its function is as follows. May play a role in DNA repair. It seems to be involved in an RecBC-independent recombinational process of DNA repair. It may act with RecF and RecO. This chain is Recombination protein RecR, found in Staphylococcus aureus (strain MSSA476).